We begin with the raw amino-acid sequence, 177 residues long: R-phycoerythrin beta chain (177 aa).

Residues Cys-50 and Cys-61 each contribute to the phycourobilin site. N4-methylasparagine is present on Asn-72. 2 residues coordinate (2R,3E)-phycoerythrobilin: Cys-82 and Cys-158.

Belongs to the phycobiliprotein family. As to quaternary structure, heterodimer of an alpha and a beta chain. Contains two covalently linked phycoerythrobilin chromophores and one covalently linked phycourobilin chromophore.

It localises to the plastid. It is found in the chloroplast thylakoid membrane. In terms of biological role, light-harvesting photosynthetic bile pigment-protein from the phycobiliprotein complex. The chain is R-phycoerythrin beta chain (cpeB) from Pyropia yezoensis (Susabi-nori).